A 158-amino-acid polypeptide reads, in one-letter code: NAD(P)H-quinone oxidoreductase subunit N (158 aa).

The protein belongs to the complex I NdhN subunit family. NDH-1 can be composed of about 15 different subunits; different subcomplexes with different compositions have been identified which probably have different functions.

The protein localises to the cellular thylakoid membrane. It carries out the reaction a plastoquinone + NADH + (n+1) H(+)(in) = a plastoquinol + NAD(+) + n H(+)(out). It catalyses the reaction a plastoquinone + NADPH + (n+1) H(+)(in) = a plastoquinol + NADP(+) + n H(+)(out). Functionally, NDH-1 shuttles electrons from an unknown electron donor, via FMN and iron-sulfur (Fe-S) centers, to quinones in the respiratory and/or the photosynthetic chain. The immediate electron acceptor for the enzyme in this species is believed to be plastoquinone. Couples the redox reaction to proton translocation, and thus conserves the redox energy in a proton gradient. Cyanobacterial NDH-1 also plays a role in inorganic carbon-concentration. The chain is NAD(P)H-quinone oxidoreductase subunit N from Prochlorococcus marinus (strain MIT 9312).